Here is a 180-residue protein sequence, read N- to C-terminus: DNA-directed RNA polymerase subunit omega (180 aa).

The interval 100–180 (ISKSGTPILP…NSDDSETTNS (81 aa)) is disordered. Acidic residues-rich tracts occupy residues 137 to 151 (EVDV…DEET) and 159 to 180 (AEAE…TTNS).

It belongs to the RNA polymerase subunit omega family. As to quaternary structure, the RNAP catalytic core consists of 2 alpha, 1 beta, 1 beta' and 1 omega subunit. When a sigma factor is associated with the core the holoenzyme is formed, which can initiate transcription.

The catalysed reaction is RNA(n) + a ribonucleoside 5'-triphosphate = RNA(n+1) + diphosphate. In terms of biological role, promotes RNA polymerase assembly. Latches the N- and C-terminal regions of the beta' subunit thereby facilitating its interaction with the beta and alpha subunits. This is DNA-directed RNA polymerase subunit omega from Pelagibacter ubique (strain HTCC1062).